Consider the following 95-residue polypeptide: Small ribosomal subunit protein uS17 (95 aa).

This sequence belongs to the universal ribosomal protein uS17 family. As to quaternary structure, part of the 30S ribosomal subunit.

Functionally, one of the primary rRNA binding proteins, it binds specifically to the 5'-end of 16S ribosomal RNA. This Psychrobacter sp. (strain PRwf-1) protein is Small ribosomal subunit protein uS17.